Reading from the N-terminus, the 200-residue chain is Imidazoleglycerol-phosphate dehydratase (200 aa).

This sequence belongs to the imidazoleglycerol-phosphate dehydratase family.

Its subcellular location is the cytoplasm. The catalysed reaction is D-erythro-1-(imidazol-4-yl)glycerol 3-phosphate = 3-(imidazol-4-yl)-2-oxopropyl phosphate + H2O. It functions in the pathway amino-acid biosynthesis; L-histidine biosynthesis; L-histidine from 5-phospho-alpha-D-ribose 1-diphosphate: step 6/9. The protein is Imidazoleglycerol-phosphate dehydratase of Bifidobacterium animalis subsp. lactis (strain AD011).